The sequence spans 552 residues: Urocanate hydratase (552 aa).

NAD(+) contacts are provided by residues 48–49 (GG), glutamine 126, 172–174 (GMG), glutamate 192, arginine 197, 238–239 (NA), 259–263 (QTSAH), 269–270 (YV), and tyrosine 318. Cysteine 406 is a catalytic residue. Glycine 488 contributes to the NAD(+) binding site.

This sequence belongs to the urocanase family. It depends on NAD(+) as a cofactor.

The protein resides in the cytoplasm. The enzyme catalyses 4-imidazolone-5-propanoate = trans-urocanate + H2O. It functions in the pathway amino-acid degradation; L-histidine degradation into L-glutamate; N-formimidoyl-L-glutamate from L-histidine: step 2/3. Catalyzes the conversion of urocanate to 4-imidazolone-5-propionate. The protein is Urocanate hydratase of Herpetosiphon aurantiacus (strain ATCC 23779 / DSM 785 / 114-95).